A 261-amino-acid polypeptide reads, in one-letter code: 5'-nucleotidase SurE (261 aa).

The a divalent metal cation site is built by Asp-10, Asp-11, Ser-41, and Asn-96.

It belongs to the SurE nucleotidase family. A divalent metal cation is required as a cofactor.

It is found in the cytoplasm. It carries out the reaction a ribonucleoside 5'-phosphate + H2O = a ribonucleoside + phosphate. Functionally, nucleotidase that shows phosphatase activity on nucleoside 5'-monophosphates. The polypeptide is 5'-nucleotidase SurE (Methanococcoides burtonii (strain DSM 6242 / NBRC 107633 / OCM 468 / ACE-M)).